A 176-amino-acid chain; its full sequence is Translation initiation factor IF-3 (176 aa).

This sequence belongs to the IF-3 family. As to quaternary structure, monomer.

The protein resides in the cytoplasm. IF-3 binds to the 30S ribosomal subunit and shifts the equilibrium between 70S ribosomes and their 50S and 30S subunits in favor of the free subunits, thus enhancing the availability of 30S subunits on which protein synthesis initiation begins. This Streptococcus pyogenes serotype M18 (strain MGAS8232) protein is Translation initiation factor IF-3.